The following is a 151-amino-acid chain: Ribosome maturation factor RimP (151 aa).

Belongs to the RimP family.

It localises to the cytoplasm. Required for maturation of 30S ribosomal subunits. In Shewanella amazonensis (strain ATCC BAA-1098 / SB2B), this protein is Ribosome maturation factor RimP.